The chain runs to 419 residues: Arginine biosynthesis bifunctional protein ArgJ 1, mitochondrial (419 aa).

Lysine 177, threonine 188, glutamate 275, asparagine 414, and threonine 419 together coordinate substrate. Threonine 188 serves as the catalytic Nucleophile.

The protein belongs to the ArgJ family. Heterodimer of an alpha and a beta chain. The alpha and beta chains are autoproteolytically processed from a single precursor protein within the mitochondrion.

It is found in the mitochondrion matrix. The enzyme catalyses N(2)-acetyl-L-ornithine + L-glutamate = N-acetyl-L-glutamate + L-ornithine. It catalyses the reaction L-glutamate + acetyl-CoA = N-acetyl-L-glutamate + CoA + H(+). It participates in amino-acid biosynthesis; L-arginine biosynthesis; L-ornithine and N-acetyl-L-glutamate from L-glutamate and N(2)-acetyl-L-ornithine (cyclic): step 1/1. It functions in the pathway amino-acid biosynthesis; L-arginine biosynthesis; N(2)-acetyl-L-ornithine from L-glutamate: step 1/4. In terms of biological role, catalyzes two activities which are involved in the cyclic version of arginine biosynthesis: the synthesis of acetylglutamate from glutamate and acetyl-CoA, and of ornithine by transacetylation between acetylornithine and glutamate. The protein is Arginine biosynthesis bifunctional protein ArgJ 1, mitochondrial of Sclerotinia sclerotiorum (strain ATCC 18683 / 1980 / Ss-1) (White mold).